A 361-amino-acid chain; its full sequence is Peptide chain release factor 1 (361 aa).

Gln-235 carries the N5-methylglutamine modification.

It belongs to the prokaryotic/mitochondrial release factor family. In terms of processing, methylated by PrmC. Methylation increases the termination efficiency of RF1.

The protein resides in the cytoplasm. In terms of biological role, peptide chain release factor 1 directs the termination of translation in response to the peptide chain termination codons UAG and UAA. This chain is Peptide chain release factor 1, found in Chlamydia abortus (strain DSM 27085 / S26/3) (Chlamydophila abortus).